Here is a 470-residue protein sequence, read N- to C-terminus: Neuronal acetylcholine receptor subunit beta-4 (470 aa).

The signal sequence occupies residues 1–3 (STA). At 4 to 216 (ADAEEKLMNH…IIKRKPLFYT (213 aa)) the chain is on the extracellular side. N-linked (GlcNAc...) asparagine glycans are attached at residues Asn-29, Asn-118, and Asn-146. Residues Cys-133 and Cys-147 are joined by a disulfide bond. A helical transmembrane segment spans residues 217–237 (INLIIPCVLITSLAILVFYLP). Residues 238-245 (SDCGEKMT) lie on the Cytoplasmic side of the membrane. Residue Glu-242 coordinates Na(+). A helical transmembrane segment spans residues 246–266 (LCISVLLALTVFLLLISKIVP). The Extracellular portion of the chain corresponds to 267 to 278 (PTSLDVPLIGKY). A helical transmembrane segment spans residues 279-299 (LMFTMVLVTFSIVTSVCVLNV). The Cytoplasmic portion of the chain corresponds to 300-438 (HHRSPSTHTM…WKYVAMVVDR (139 aa)). Residues 439 to 459 (LFLWIFVLVCVLGTVGLFLQP) form a helical membrane-spanning segment. Over 460–470 (LFQNHIAATNP) the chain is Extracellular.

This sequence belongs to the ligand-gated ion channel (TC 1.A.9) family. Acetylcholine receptor (TC 1.A.9.1) subfamily. Beta-4/CHRNB4 sub-subfamily. Neuronal AChR is composed of two different types of subunits: alpha and beta. CHRNB4/Beta-4 subunit can be combined to CHRNA2/alpha-2, CHRNA3/alpha-3 or CHRNA4/alpha-4, CHRNA5/alpha-5 and CHRNB3/beta-3 to give rise to functional receptors.

It is found in the synaptic cell membrane. The protein resides in the cell membrane. The enzyme catalyses Ca(2+)(in) = Ca(2+)(out). It catalyses the reaction K(+)(in) = K(+)(out). It carries out the reaction Na(+)(in) = Na(+)(out). Activated by a myriad of ligands such as acetylcholine, cytisine, nicotine, choline and epibatidine. The heteropentamer CHRNA3:CHRNB4 activity is blocked by the alpha-conotoxin ImI and AuIB. Its function is as follows. Component of neuronal acetylcholine receptors (nAChRs) that function as pentameric, ligand-gated cation channels with high calcium permeability among other activities. nAChRs are excitatory neurotrasnmitter receptors formed by a collection of nAChR subunits known to mediate synaptic transmission in the nervous system and the neuromuscular junction. Each nAchR subunit confers differential attributes to channel properties, including activation, deactivation and desensitization kinetics, pH sensitivity, cation permeability, and binding to allosteric modulators. CHRNB4 forms heteropentameric neuronal acetylcholine receptors with CHRNA2, CHRNA3 and CHRNA4, as well as CHRNA5 and CHRNB3 as accesory subunits. CHRNA3:CHRNB4 being predominant in neurons of the autonomic ganglia, it is known as ganglionic nicotinic receptor. CHRNA3:CHRNB4 or CHRNA3:CHRNA5:CHRNB4 play also an important role in the habenulo-interpeduncular tract, modulating the mesolimbic dopamine system and affecting reward circuits and addiction. Hypothalamic CHRNA3:CHRNB4 nAChR activation by nicotine leads to activation of POMC neurons and a decrease in food intake. This Gallus gallus (Chicken) protein is Neuronal acetylcholine receptor subunit beta-4 (CHRNB4).